The sequence spans 131 residues: uncharacterized protein (131 aa).

Positions 1–67 are disordered; sequence MCSARKLLRG…HSGEPIGDDY (67 aa). Phosphoserine is present on Ser-14. Residues 99–119 form a helical membrane-spanning segment; it reads VVVLFFWLMLWFLGLQALGLV.

This sequence belongs to the FAM241 family.

It localises to the membrane. This is an uncharacterized protein from Mus musculus (Mouse).